The sequence spans 222 residues: Glutathione S-transferase A4 (222 aa).

Methionine 1 is subject to N-acetylmethionine. The GST N-terminal domain maps to 3 to 83; sequence TKPKLHYPNG…YIADKHHLFG (81 aa). Glutathione contacts are provided by residues tyrosine 9, 54–55, and 67–68; these read QV and QT. Residues 85–208 form the GST C-terminal domain; sequence DLKERTLIDM…EPGSKKKPPP (124 aa).

Belongs to the GST superfamily. Alpha family. Homodimer.

It localises to the cytoplasm. The enzyme catalyses RX + glutathione = an S-substituted glutathione + a halide anion + H(+). Its function is as follows. Conjugation of reduced glutathione to a wide number of exogenous and endogenous hydrophobic electrophiles. The sequence is that of Glutathione S-transferase A4 (GSTA4) from Bos taurus (Bovine).